The chain runs to 122 residues: UPF0382 membrane protein SE_0353 (122 aa).

A run of 4 helical transmembrane segments spans residues 3-23 (VFII…AFGA), 46-66 (MYHG…SINV), 69-89 (AGWL…FLAL), and 98-118 (ITPI…IATL).

It belongs to the UPF0382 family.

It localises to the cell membrane. This chain is UPF0382 membrane protein SE_0353, found in Staphylococcus epidermidis (strain ATCC 12228 / FDA PCI 1200).